Consider the following 369-residue polypeptide: Trichocyst matrix protein T1-B (369 aa).

The signal sequence occupies residues 1-16 (MYKLAVCTLLILSVTA). A propeptide spanning residues 17 to 55 (IDVTNSVWTSHDQKAFAQIKQSGWGNFILNFGELHLQTG) is cleaved from the precursor. A coiled-coil region spans residues 56–180 (GILAELNTEI…AIDESLQLLS (125 aa)). Positions 190 to 225 (IQKVQKNLTKIQQSLKRHSTFQTFIKTLLEIAVEAN) are excised as a propeptide. A coiled-coil region spans residues 262–354 (KDFEARVIQL…AHQALDLLNQ (93 aa)).

It belongs to the TMP family. Post-translationally, two components are produced by post-translational processing from the precursor peptide.

It is found in the trichocyst. Structural protein that crystallize inside the trichocyst matrix. This Paramecium tetraurelia protein is Trichocyst matrix protein T1-B (T1B).